Here is a 460-residue protein sequence, read N- to C-terminus: Amino acid transporter AVT6A (460 aa).

The next 11 membrane-spanning stretches (helical) occupy residues 45–65 (FSGA…MALP), 66–86 (ATMK…MAFL), 120–140 (ILLQ…YMII), 172–192 (AAIL…FKRI), 199–219 (SALS…ISIM), 238–258 (LTSF…FICH), 281–301 (ALML…LLFG), 336–356 (LMLV…GLLF), 371–391 (CLTA…PSIW), 394–414 (FQFT…ASII), and 427–447 (TTLA…AIYS).

It belongs to the amino acid/polyamine transporter 2 family. Amino acid/auxin permease (AAAP) (TC 2.A.18.6) subfamily.

The protein localises to the membrane. In Arabidopsis thaliana (Mouse-ear cress), this protein is Amino acid transporter AVT6A.